The chain runs to 433 residues: 3-phosphoshikimate 1-carboxyvinyltransferase (433 aa).

3-phosphoshikimate contacts are provided by Lys15, Ser16, and Arg20. A phosphoenolpyruvate-binding site is contributed by Lys15. Residues Gly96 and Arg124 each coordinate phosphoenolpyruvate. Residues Ser169, Gln171, Ser195, Asp318, and Lys345 each contribute to the 3-phosphoshikimate site. Gln171 lines the phosphoenolpyruvate pocket. Asp318 acts as the Proton acceptor in catalysis. Residues Arg349 and Arg393 each contribute to the phosphoenolpyruvate site.

Belongs to the EPSP synthase family. In terms of assembly, monomer.

It is found in the cytoplasm. The enzyme catalyses 3-phosphoshikimate + phosphoenolpyruvate = 5-O-(1-carboxyvinyl)-3-phosphoshikimate + phosphate. The protein operates within metabolic intermediate biosynthesis; chorismate biosynthesis; chorismate from D-erythrose 4-phosphate and phosphoenolpyruvate: step 6/7. In terms of biological role, catalyzes the transfer of the enolpyruvyl moiety of phosphoenolpyruvate (PEP) to the 5-hydroxyl of shikimate-3-phosphate (S3P) to produce enolpyruvyl shikimate-3-phosphate and inorganic phosphate. The polypeptide is 3-phosphoshikimate 1-carboxyvinyltransferase (Chlorobium luteolum (strain DSM 273 / BCRC 81028 / 2530) (Pelodictyon luteolum)).